The sequence spans 84 residues: Small ribosomal subunit protein bS20 (84 aa).

Belongs to the bacterial ribosomal protein bS20 family.

Functionally, binds directly to 16S ribosomal RNA. In Azobacteroides pseudotrichonymphae genomovar. CFP2, this protein is Small ribosomal subunit protein bS20.